The chain runs to 444 residues: MSKVAIIGAGPCGLSILRAFEHLEKKGEKIPEIVCFEKQESWGGLWNYNWRTGSDQYGDPVPNSMYRYLWSNGPKECLEFADYSFDQHFGKSIPSFPPREVLQDYILGRVSKGNIKNKIKFNTRVINTVYRNDKFEINYQDKVNDKTLSDTFDYLVVSTGHFSVPFIPEYEGMSSFPGRIMHSHDFRDAEEFRGKNVIVLGSSYSAEDVALQCNKYGAKSVTIGYRHNPMGFKWPKGMKEVHYLDKLDGKKAIFKDGTEQDADVVILCTGYLHHFPFLDESLKLKTHNRLYPPKLYKGVVWQDNHKLLYLGMQDQFHTFNMFDCQAWFARDVIMDKIKMPSDDEIDKDINKWVSMEEKLENPDQMIDFQTEYTKELHNISDYPKIDFELIRKHFKEWEHHKVEDILTYRNKSFSSPVTGSVAPVHHTPWEKAMDDSMKTFLNKR.

FAD-binding residues include cysteine 12, glutamate 37, glutamine 39, leucine 45, and tryptophan 46. NADP(+) is bound by residues tryptophan 70 and asparagine 72. Asparagine 72 and valine 125 together coordinate FAD. Tyrosine 170, serine 202, serine 203, serine 205, arginine 226, histidine 227, and asparagine 288 together coordinate NADP(+). Residues glutamine 315 and threonine 318 each contribute to the FAD site. NADP(+) is bound at residue arginine 409.

It belongs to the FMO family. Homodimer. It depends on FAD as a cofactor.

It carries out the reaction trimethylamine + NADPH + O2 = trimethylamine N-oxide + NADP(+) + H2O. Catalyzes the oxidation of trimethylamine (TMA) to produce trimethylamine N-oxide (TMAO). In vitro, has a broad substrate specificity, oxidizing many nitrogen- and sulfur-containing compounds, including dimethylamine (DMA), dimethylsulfide (DMS), dimethylsulfoxide (DMSO) and methimazole. TMA shows the highest affinity. The chain is Trimethylamine monooxygenase from Pelagibacter sp. (strain HTCC7211).